The sequence spans 219 residues: 7-cyano-7-deazaguanine synthase (219 aa).

ATP is bound at residue 10-20 (FSGGQDSTTCL). 4 residues coordinate Zn(2+): C188, C197, C200, and C203.

It belongs to the QueC family. As to quaternary structure, homodimer. Requires Zn(2+) as cofactor.

The catalysed reaction is 7-carboxy-7-deazaguanine + NH4(+) + ATP = 7-cyano-7-deazaguanine + ADP + phosphate + H2O + H(+). The protein operates within purine metabolism; 7-cyano-7-deazaguanine biosynthesis. Its function is as follows. Catalyzes the ATP-dependent conversion of 7-carboxy-7-deazaguanine (CDG) to 7-cyano-7-deazaguanine (preQ(0)). The protein is 7-cyano-7-deazaguanine synthase of Clostridium botulinum (strain Loch Maree / Type A3).